Here is a 79-residue protein sequence, read N- to C-terminus: Beta-hexatoxin-Mg1a (79 aa).

Positions 1–20 (MKAPATTLILVMSLISVLWA) are cleaved as a signal peptide. Residues 21–50 (TPDLEEGDLLAELGDLIATDDEYPMKPEER) constitute a propeptide that is removed on maturation. Cystine bridges form between Cys52–Cys66, Cys59–Cys71, and Cys65–Cys76.

Belongs to the neurotoxin 15 family. 01 (magi-5) subfamily. In terms of tissue distribution, expressed by the venom gland.

The protein localises to the secreted. Its function is as follows. Insect and vertebrate active toxin. Binds to site 4 of mammalian voltage-gated sodium channels and shifts the activation voltage of the mammalian Nav1.2a/SCN2A channel to more hyperpolarized voltages, whereas the insect channel, DmNav1 (para), is not affected. Competes for binding at site 3 of the insect sodium channel. Causes temporary paralysis when injected into lepidopteran larvae at 8.6 nmol/g. A low intracranial injection dose into mice causes lacrimation, closure of the eyes and sweating. A high injection dose causes extensive lacrimation and death. This Macrothele gigas (Japanese funnel web spider) protein is Beta-hexatoxin-Mg1a.